The sequence spans 923 residues: Protein dct-6 (923 aa).

The stretch at 312-347 (DMNDQIEQMISLLVDELSELEKLEQLCKEVERTGNQ) forms a coiled coil.

May have a role in tumor suppression. This is Protein dct-6 (dct-6) from Caenorhabditis elegans.